Reading from the N-terminus, the 888-residue chain is Extra-large guanine nucleotide-binding protein 1 (888 aa).

The tract at residues 98–119 is disordered; sequence SVIEHTEEEEEEEGGDGEDCEL. The segment covering 103–118 has biased composition (acidic residues); that stretch reads TEEEEEEEGGDGEDCE. The Nuclear localization signal motif lies at 205–222; the sequence is RRVRVVPVKKQPQTKGKK. The segment at 225–268 adopts an RING-type; degenerate zinc-finger fold; the sequence is CYRCFKGSRFTEKEVCLVCDAKYCNSCVLRAMGSMPEGRKCVTC. A G-alpha domain is found at 482-879; sequence TLQKILLVGN…NICMSEYSMY (398 aa). The tract at residues 485–498 is G1 motif; it reads KILLVGNSGSGTST. GTP is bound by residues 490–498 and 661–669; these read GNSGSGTST and DILYAEGVT. Ca(2+) contacts are provided by serine 497 and threonine 669. The segment at 661–669 is G2 motif; that stretch reads DILYAEGVT. Residues 702–711 form a G3 motif region; the sequence is YQLIRVPSRG. A G4 motif region spans residues 770–777; that stretch reads LLILNKYD. 774–777 contributes to the GTP binding site; that stretch reads NKYD. Residues 843–848 form a G5 motif region; that stretch reads SKSLDP.

Belongs to the G-alpha family. XLG subfamily. Ca(2+) is required as a cofactor. As to expression, ubiquitous. Strongly expressed in vascular tissues, root and shoot meristems and lateral root primordia.

The protein localises to the nucleus. Functionally, guanine nucleotide-binding proteins (G proteins) are involved as modulators or transducers in various transmembrane signaling systems. Binds GTP with specificity. Plays a role in the root morphogenesis by regulation of the cell proliferation. In Arabidopsis thaliana (Mouse-ear cress), this protein is Extra-large guanine nucleotide-binding protein 1 (XLG1).